The following is a 179-amino-acid chain: uncharacterized protein (179 aa).

It belongs to the CAPAB/TerDEXZ family.

This is an uncharacterized protein from Synechocystis sp. (strain ATCC 27184 / PCC 6803 / Kazusa).